A 689-amino-acid chain; its full sequence is Transcription factor BHLH42 (689 aa).

Disordered stretches follow at residues I192 to V287 and D458 to V489. Polar residues predominate over residues E206–V217. Positions E246–D271 are enriched in acidic residues. Residues E483–R496 form a basic motif region. Residues E483–L532 form the bHLH domain. Residues E497–L532 are helix-loop-helix motif. The disordered stretch occupies residues E547–R570.

The protein belongs to the bHLH protein family. In terms of assembly, interacts with MYB123. In terms of tissue distribution, expressed in the inner pericarp of maturing fruits.

The protein localises to the nucleus. Functionally, transcription activator involved in the spatiotemporal regulation of anthocyanin biosynthesis specifically in the inner pericarp of red-fleshed kiwifruits. Functions in association with MYB123 to activate the promoters of LDOX (ANS) and F3GT1 that encode the dedicated enzymes for anthocyanin biosynthesis. The protein is Transcription factor BHLH42 of Actinidia chinensis var. chinensis (Chinese soft-hair kiwi).